Here is a 178-residue protein sequence, read N- to C-terminus: MRRPFKAAAPTKDGPRSNRDIRVPRVQLIDAEGQNRGDVSINDALLLAEEAGLDLVEISPNAVPPVVKILDLGKLKYANQKKAAEARKNQKVIEIKEIKMRPNIDSHDYETKMKAVRRFFEEGDKVKLTLRFRGREMAHMELGMQLLNKVREEVATIAKVEAEPKLEGRQMMMVLAPR.

Residues 1–20 (MRRPFKAAAPTKDGPRSNRD) form a disordered region.

It belongs to the IF-3 family. As to quaternary structure, monomer.

The protein resides in the cytoplasm. IF-3 binds to the 30S ribosomal subunit and shifts the equilibrium between 70S ribosomes and their 50S and 30S subunits in favor of the free subunits, thus enhancing the availability of 30S subunits on which protein synthesis initiation begins. This Mesorhizobium japonicum (strain LMG 29417 / CECT 9101 / MAFF 303099) (Mesorhizobium loti (strain MAFF 303099)) protein is Translation initiation factor IF-3.